The following is a 251-amino-acid chain: Mlc titration factor A (251 aa).

Residues histidine 111, histidine 148, histidine 152, and glutamate 211 each contribute to the Zn(2+) site.

It belongs to the MtfA family. In terms of assembly, interacts with Mlc. Requires Zn(2+) as cofactor.

Its subcellular location is the cytoplasm. In terms of biological role, involved in the modulation of the activity of the glucose-phosphotransferase system (glucose-PTS). Interacts with the transcriptional repressor Mlc, preventing its interaction with DNA and leading to the modulation of expression of genes regulated by Mlc, including ptsG, which encodes the PTS system glucose-specific EIICB component. Functionally, shows zinc-dependent metallopeptidase activity. This is Mlc titration factor A from Salmonella arizonae (strain ATCC BAA-731 / CDC346-86 / RSK2980).